Consider the following 340-residue polypeptide: Formimidoylglutamase (340 aa).

Mn(2+) contacts are provided by His-129, Asp-160, His-162, Asp-164, Asp-257, and Asp-259.

It belongs to the arginase family. The cofactor is Mn(2+).

The enzyme catalyses N-formimidoyl-L-glutamate + H2O = formamide + L-glutamate. It functions in the pathway amino-acid degradation; L-histidine degradation into L-glutamate; L-glutamate from N-formimidoyl-L-glutamate (hydrolase route): step 1/1. Functionally, catalyzes the conversion of N-formimidoyl-L-glutamate to L-glutamate and formamide. The polypeptide is Formimidoylglutamase (Vibrio parahaemolyticus serotype O3:K6 (strain RIMD 2210633)).